The primary structure comprises 32 residues: Ranatuerin-2Lb (32 aa).

The cysteines at positions 27 and 32 are disulfide-linked.

In terms of tissue distribution, expressed by the skin glands.

It localises to the secreted. Functionally, antibacterial activity against Gram-positive bacterium S.aureus and Gram-negative bacterium E.coli. Has activity against C.albicans. In Rana luteiventris (Columbia spotted frog), this protein is Ranatuerin-2Lb.